We begin with the raw amino-acid sequence, 346 residues long: Sulfate/thiosulfate import ATP-binding protein CysA 1 (346 aa).

Residues 3–237 form the ABC transporter domain; sequence VKVSGITKQF…PNSPFVFSFI (235 aa). 35 to 42 is a binding site for ATP; it reads GPSGSGKT.

It belongs to the ABC transporter superfamily. Sulfate/tungstate importer (TC 3.A.1.6) family. In terms of assembly, the complex is composed of two ATP-binding proteins (CysA), two transmembrane proteins (CysT and CysW) and a solute-binding protein (CysP).

Its subcellular location is the cell inner membrane. It catalyses the reaction sulfate(out) + ATP + H2O = sulfate(in) + ADP + phosphate + H(+). The catalysed reaction is thiosulfate(out) + ATP + H2O = thiosulfate(in) + ADP + phosphate + H(+). In terms of biological role, part of the ABC transporter complex CysAWTP involved in sulfate/thiosulfate import. Responsible for energy coupling to the transport system. The sequence is that of Sulfate/thiosulfate import ATP-binding protein CysA 1 from Agrobacterium fabrum (strain C58 / ATCC 33970) (Agrobacterium tumefaciens (strain C58)).